Reading from the N-terminus, the 282-residue chain is 4-diphosphocytidyl-2-C-methyl-D-erythritol kinase (282 aa).

K13 is an active-site residue. 96–106 (PMGGGIGGGSS) lines the ATP pocket. D138 is an active-site residue.

Belongs to the GHMP kinase family. IspE subfamily.

The enzyme catalyses 4-CDP-2-C-methyl-D-erythritol + ATP = 4-CDP-2-C-methyl-D-erythritol 2-phosphate + ADP + H(+). The protein operates within isoprenoid biosynthesis; isopentenyl diphosphate biosynthesis via DXP pathway; isopentenyl diphosphate from 1-deoxy-D-xylulose 5-phosphate: step 3/6. Functionally, catalyzes the phosphorylation of the position 2 hydroxy group of 4-diphosphocytidyl-2C-methyl-D-erythritol. The sequence is that of 4-diphosphocytidyl-2-C-methyl-D-erythritol kinase from Pseudomonas syringae pv. syringae (strain B728a).